Here is a 202-residue protein sequence, read N- to C-terminus: Matrix protein (202 aa).

The PPXY motif signature appears at 35–38 (PPEY). The essential for glycoprotein binding stretch occupies residues 115 to 151 (KLRRTLIFQWADSRGPLEGEELEYSQEITWDDDTEFV).

This sequence belongs to the lyssavirus matrix protein family. In terms of assembly, homomultimer. Interacts with nucleoprotein and with the cytoplasmic domain of glycoprotein. Interacts with host ATP6V1A; this interaction plays an important role in virion uncoating after viral entry.

The protein localises to the virion membrane. The protein resides in the host endomembrane system. Its subcellular location is the host cytoplasm. Its function is as follows. Plays a major role in assembly, budding and uncoating of virion after membrane fusion. Completely covers the ribonucleoprotein coil and keep it in condensed bullet-shaped form. Inhibits viral transcription and stimulates replication. Plays a major role in early induction of TRAIL-mediated apoptosis in infected neurons. Inhibits the integrated stress response (ISR) in the infected cell by blocking the formation of stress granules. This Homo sapiens (Human) protein is Matrix protein (M).